Reading from the N-terminus, the 547-residue chain is Chaperonin GroEL (547 aa).

ATP is bound by residues 30 to 33, K51, 87 to 91, G415, and D495; these read TLGP and DGTTT.

The protein belongs to the chaperonin (HSP60) family. Forms a cylinder of 14 subunits composed of two heptameric rings stacked back-to-back. Interacts with the co-chaperonin GroES.

Its subcellular location is the cytoplasm. It catalyses the reaction ATP + H2O + a folded polypeptide = ADP + phosphate + an unfolded polypeptide.. Functionally, together with its co-chaperonin GroES, plays an essential role in assisting protein folding. The GroEL-GroES system forms a nano-cage that allows encapsulation of the non-native substrate proteins and provides a physical environment optimized to promote and accelerate protein folding. This chain is Chaperonin GroEL, found in Ralstonia nicotianae (strain ATCC BAA-1114 / GMI1000) (Ralstonia solanacearum).